The primary structure comprises 188 residues: UPF0200 protein M164_1169 (188 aa).

15–22 contacts ATP; the sequence is GMPGSGKS.

Belongs to the UPF0200 family.

The protein is UPF0200 protein M164_1169 of Saccharolobus islandicus (strain M.16.4 / Kamchatka #3) (Sulfolobus islandicus).